A 270-amino-acid polypeptide reads, in one-letter code: Sec-independent protein translocase protein TatC (270 aa).

Helical transmembrane passes span 35–55 (LILS…YRVQ), 93–113 (AFWA…WAFI), 124–144 (WGLP…VFGY), 176–196 (VVTF…AVIL), 209–229 (QGWR…TPTP), and 231–251 (PANM…GVVL).

Belongs to the TatC family. Forms a complex with TatA.

Its subcellular location is the cell membrane. Part of the twin-arginine translocation (Tat) system that transports large folded proteins containing a characteristic twin-arginine motif in their signal peptide across membranes. The protein is Sec-independent protein translocase protein TatC of Deinococcus radiodurans (strain ATCC 13939 / DSM 20539 / JCM 16871 / CCUG 27074 / LMG 4051 / NBRC 15346 / NCIMB 9279 / VKM B-1422 / R1).